We begin with the raw amino-acid sequence, 347 residues long: Druantia protein DruD (347 aa).

Its subcellular location is the cytoplasm. Its function is as follows. Component of antiviral defense system Druantia type I, composed of DruA, DruB, DruC, DruD and DruE. Expression of Druantia in E.coli (strain MG1655) confers resistance to phage lambda, SECphi18, SECphi27 and T4. The protein is Druantia protein DruD of Escherichia coli (strain UMEA 4076-1).